The chain runs to 418 residues: Phospho-N-acetylmuramoyl-pentapeptide-transferase (418 aa).

A run of 10 helical transmembrane segments spans residues 22 to 42 (YISFRSVLSFSLSLIISVLIG), 72 to 92 (TPTMGGIIIIIAILIPVLLLA), 95 to 115 (SNIYVLLMLITTIWLGILGLI), 135 to 155 (IIAQVGLGLIVGLIVYLSPNI), 208 to 228 (AATWILFVLITVFIVTAVSNG), 244 to 264 (AIIGVVLGILAYVSANLGFAA), 277 to 297 (LTVFASAFVGACMGFLWHNAF), 302 to 322 (FMGDIGSLTLGGIIAVFAIII), 326 to 346 (LLLPMLCGIFFTESLSVMIQV), and 395 to 415 (KIVVRFWLIGILLAALTVVTL).

This sequence belongs to the glycosyltransferase 4 family. MraY subfamily. Mg(2+) is required as a cofactor.

The protein localises to the cell inner membrane. The enzyme catalyses UDP-N-acetyl-alpha-D-muramoyl-L-alanyl-gamma-D-glutamyl-meso-2,6-diaminopimeloyl-D-alanyl-D-alanine + di-trans,octa-cis-undecaprenyl phosphate = di-trans,octa-cis-undecaprenyl diphospho-N-acetyl-alpha-D-muramoyl-L-alanyl-D-glutamyl-meso-2,6-diaminopimeloyl-D-alanyl-D-alanine + UMP. It participates in cell wall biogenesis; peptidoglycan biosynthesis. Catalyzes the initial step of the lipid cycle reactions in the biosynthesis of the cell wall peptidoglycan: transfers peptidoglycan precursor phospho-MurNAc-pentapeptide from UDP-MurNAc-pentapeptide onto the lipid carrier undecaprenyl phosphate, yielding undecaprenyl-pyrophosphoryl-MurNAc-pentapeptide, known as lipid I. This Azobacteroides pseudotrichonymphae genomovar. CFP2 protein is Phospho-N-acetylmuramoyl-pentapeptide-transferase.